The chain runs to 236 residues: Uridylate kinase (236 aa).

ATP is bound at residue 10 to 13 (KLSG). Gly-52 lines the UMP pocket. Residues Gly-53 and Arg-57 each contribute to the ATP site. Residues Asp-72 and 133 to 140 (TGNPFFTT) contribute to the UMP site. The ATP site is built by Thr-160, Tyr-166, and Asp-169.

Belongs to the UMP kinase family. Homohexamer.

The protein localises to the cytoplasm. It carries out the reaction UMP + ATP = UDP + ADP. It participates in pyrimidine metabolism; CTP biosynthesis via de novo pathway; UDP from UMP (UMPK route): step 1/1. With respect to regulation, inhibited by UTP. Its function is as follows. Catalyzes the reversible phosphorylation of UMP to UDP. This is Uridylate kinase from Bacteroides thetaiotaomicron (strain ATCC 29148 / DSM 2079 / JCM 5827 / CCUG 10774 / NCTC 10582 / VPI-5482 / E50).